We begin with the raw amino-acid sequence, 256 residues long: Hydroxyacylglutathione hydrolase (256 aa).

Positions 56, 58, 60, 61, 114, 133, and 171 each coordinate Zn(2+).

The protein belongs to the metallo-beta-lactamase superfamily. Glyoxalase II family. In terms of assembly, monomer. Zn(2+) serves as cofactor.

The enzyme catalyses an S-(2-hydroxyacyl)glutathione + H2O = a 2-hydroxy carboxylate + glutathione + H(+). It functions in the pathway secondary metabolite metabolism; methylglyoxal degradation; (R)-lactate from methylglyoxal: step 2/2. Functionally, thiolesterase that catalyzes the hydrolysis of S-D-lactoyl-glutathione to form glutathione and D-lactic acid. This Rhodobacter capsulatus (Rhodopseudomonas capsulata) protein is Hydroxyacylglutathione hydrolase.